The primary structure comprises 442 residues: Coiled-coil domain-containing protein 91 (442 aa).

The tract at residues 1–16 is GGA1-binding motif; that stretch reads MDDDDFGGFEAAETFD. The segment at 1–27 is disordered; the sequence is MDDDDFGGFEAAETFDGEQGGNQAVSP. A phosphoserine mark is found at Ser43 and Ser46. 2 disordered regions span residues 48 to 80 and 114 to 134; these read ELILDHDHSSPSTGHLPPDAVISSADDTHADSS and HGALALEDEPEGPGVHVSNSQ. Coiled coils occupy residues 130–210, 253–318, and 346–408; these read VSNS…GHEA, HAQH…MKDV, and ARDQ…RRLD. The interval 211 to 414 is homodimerization; that stretch reads LSIIVDEYKA…RRLDQVTRQR (204 aa).

As to quaternary structure, homodimer. Interacts with GGA1, GGA2 and AP1G1.

The protein localises to the membrane. The protein resides in the golgi apparatus. It localises to the trans-Golgi network membrane. Its subcellular location is the trans-Golgi network. Its function is as follows. Involved in the regulation of membrane traffic through the trans-Golgi network (TGN). Functions in close cooperation with the GGAs in the sorting of hydrolases to lysosomes. The sequence is that of Coiled-coil domain-containing protein 91 (Ccdc91) from Mus musculus (Mouse).